A 386-amino-acid chain; its full sequence is Chaperone protein DnaJ (386 aa).

A J domain is found at 4 to 68 (NFYDVLGVSR…QKRQQYDQLG (65 aa)). Composition is skewed to basic and acidic residues over residues 22-35 (KAYRKQAAEHHPDV) and 43-79 (ERFKAIQKAKEVLTDEQKRQQYDQLGHDRFTEADKRG). A disordered region spans residues 22 to 132 (KAYRKQAAEH…GGNRPRQGQD (111 aa)). Gly residues-rich tracts occupy residues 80-104 (ATGGGGPGGAGGPFGGAGGAGGAGG) and 113-125 (FGGGGGRGGGGGN). The CR-type zinc finger occupies 147–229 (GATKEVTLTR…CGGDGVVREE (83 aa)). Zn(2+) is bound by residues C160, C163, C177, C180, C203, C206, C217, and C220. CXXCXGXG motif repeat units follow at residues 160-167 (CDTCDGAG), 177-184 (CSQCNGRG), 203-210 (CPRCEGSG), and 217-224 (CADCGGDG).

The protein belongs to the DnaJ family. In terms of assembly, homodimer. Zn(2+) is required as a cofactor.

It is found in the cytoplasm. Participates actively in the response to hyperosmotic and heat shock by preventing the aggregation of stress-denatured proteins and by disaggregating proteins, also in an autonomous, DnaK-independent fashion. Unfolded proteins bind initially to DnaJ; upon interaction with the DnaJ-bound protein, DnaK hydrolyzes its bound ATP, resulting in the formation of a stable complex. GrpE releases ADP from DnaK; ATP binding to DnaK triggers the release of the substrate protein, thus completing the reaction cycle. Several rounds of ATP-dependent interactions between DnaJ, DnaK and GrpE are required for fully efficient folding. Also involved, together with DnaK and GrpE, in the DNA replication of plasmids through activation of initiation proteins. The polypeptide is Chaperone protein DnaJ (Halorubrum lacusprofundi (strain ATCC 49239 / DSM 5036 / JCM 8891 / ACAM 34)).